A 101-amino-acid chain; its full sequence is MSRRCELTAKGAQVGHKVSHSNIKTKRRFLPNLVNITFISDALGRQVRLRVSTNALKSVDHRGGLDGFLLKAKDAELSPKAVDIKRQIEKKKLTAELAAQA.

The protein belongs to the bacterial ribosomal protein bL28 family.

This is Large ribosomal subunit protein bL28 from Rhodopseudomonas palustris (strain BisA53).